The following is a 462-amino-acid chain: Alkaline ceramidase TOD1 (462 aa).

Residues 1-18 (MGKFITTTLSPPLYARSK) are Cytoplasmic-facing. The chain crosses the membrane as a helical span at residues 19–39 (LLCFSLLYLFSTIFLFLYVSL). The Lumenal segment spans residues 40–462 (SRNQCIFRYS…CKNYLTDMWG (423 aa)). N-linked (GlcNAc...) asparagine glycans are attached at residues Asn121, Asn132, and Asn449.

The protein belongs to the alkaline ceramidase family. As to expression, preferentially expressed in pollen grains, pollen tubes and silique guard cells, but barely detectable in roots, stems and leaves.

It is found in the golgi apparatus membrane. The enzyme catalyses an N-acylsphing-4-enine + H2O = sphing-4-enine + a fatty acid. The protein operates within lipid metabolism. Functionally, endoplasmic reticulum ceramidase that catalyzes the hydrolysis of ceramides into sphingosine and free fatty acids at alkaline pH (e.g. pH 9.5). Inactive on phytoceramide. Involved in the regulation of turgor pressure in guard cells and pollen tubes. This Arabidopsis thaliana (Mouse-ear cress) protein is Alkaline ceramidase TOD1.